A 344-amino-acid chain; its full sequence is N-acetyl-gamma-glutamyl-phosphate reductase (344 aa).

C148 is an active-site residue.

It belongs to the NAGSA dehydrogenase family. Type 1 subfamily.

Its subcellular location is the cytoplasm. The enzyme catalyses N-acetyl-L-glutamate 5-semialdehyde + phosphate + NADP(+) = N-acetyl-L-glutamyl 5-phosphate + NADPH + H(+). It participates in amino-acid biosynthesis; L-arginine biosynthesis; N(2)-acetyl-L-ornithine from L-glutamate: step 3/4. Functionally, catalyzes the NADPH-dependent reduction of N-acetyl-5-glutamyl phosphate to yield N-acetyl-L-glutamate 5-semialdehyde. This chain is N-acetyl-gamma-glutamyl-phosphate reductase, found in Geobacillus kaustophilus (strain HTA426).